The chain runs to 515 residues: MDEFHRYGKEDNSRQQCFLYPLFFQEDLYAISHDHYLDGSSSSEPMEHLSSNDQFSFLTVKRLIGQIRQQNHSIVLFVNCAPNPLADCKKSSYSESVLEGLTLVLEVPFSIRSKYSVEGMNEWKSFRSIHSIFPFLEDKFPHSNYISDARIPYSIHPEILVRTFRRLIRDAPSLHPLRSVLYEYRNSPENLQRSIIVVPRVNTRFFLFLWNYYVYECESILFSLLKRSSHSRSVAHRPFPQRTHFHRKIKHIIIFSRRNSLKSIWLLKDPKINYVRYGERSIIAIKGTHLLVKKCRYYLLLFRQCYFHLWSEPYRVCSHQLSKNCSSSPGYFLRVRMNPLFVRTKMLDELFIADLITNEFDPIVPIVPILGLLAREKFCDVSGRPISKLSWTNLTDDDILNRFDQIWRNLFHYYSGSFGRDGLYRIKYILSLSCAKTLACKHKSTIRVVRKELGPELFQKSFSKEREFDSLPFSSKAAARSQRERIWHSDIPQINPLVNSWQKIQDLKIENLFDQ.

This sequence belongs to the intron maturase 2 family. MatK subfamily.

The protein resides in the plastid. It is found in the chloroplast. Its function is as follows. Usually encoded in the trnK tRNA gene intron. Probably assists in splicing its own and other chloroplast group II introns. In Pinus pumila (Dwarf Siberian pine), this protein is Maturase K.